The chain runs to 328 residues: Gonadotropin-releasing hormone receptor (328 aa).

Residues 1–38 (MANRAYLEQKQTQCSIINSSFSMTHRDLPTLTLSGKIR) lie on the Extracellular side of the membrane. N18 carries N-linked (GlcNAc...) asparagine glycosylation. A helical membrane pass occupies residues 39–58 (VMVTFFLFLVSTAFNASFLM). Residues 59 to 77 (KLQRQTQKKEEVKKLTRMK) are Cytoplasmic-facing. The chain crosses the membrane as a helical span at residues 78–97 (VLLKHLTLANLLETVIVMPL). The Extracellular portion of the chain corresponds to 98 to 115 (DGIWNVTVQWYAGEFLCK). A glycan (N-linked (GlcNAc...) asparagine) is linked at N102. A disulfide bridge links C114 with C196. A helical membrane pass occupies residues 116–137 (ALSYLKLFSMYAPAFMMVVISL). Over 138–164 (DRFLAITRPLAVKSNTKVGQSLIAVAW) the chain is Cytoplasmic. A helical membrane pass occupies residues 165-184 (FLSIVLAGPQLYIFRMIYVE). At 185–212 (DISGQTGNFSQCVTHCSFPEWWQEAFYN) the chain is on the extracellular side. An N-linked (GlcNAc...) asparagine glycan is attached at N192. Residues 213–232 (LLTFSCLFIGPLLIMLVCNA) form a helical membrane-spanning segment. Residues 233–281 (KIIFTLTQVLHQDPHELQLNRSKNNIPRARLRTLKMTVAFATLFTICWT) are Cytoplasmic-facing. The helical transmembrane segment at 282-300 (PYYVLGIWYWFDPEMLNRV) threads the bilayer. The Extracellular segment spans residues 301–306 (SDPVNH). A helical membrane pass occupies residues 307-326 (FFFLFGLLNPCFDPLIYGYF). Residues 327–328 (SL) are Cytoplasmic-facing.

It belongs to the G-protein coupled receptor 1 family.

It localises to the cell membrane. Functionally, receptor for gonadotropin releasing hormone (GnRH) that mediates the action of GnRH to stimulate the secretion of the gonadotropic hormones luteinizing hormone (LH) and follicle-stimulating hormone (FSH). This receptor mediates its action by association with G-proteins that activate a phosphatidylinositol-calcium second messenger system. The chain is Gonadotropin-releasing hormone receptor (GNRHR) from Trichosurus vulpecula (Brush-tailed possum).